Consider the following 512-residue polypeptide: MNCPAMTASPSSSSSSSYSTFRPPPPLLPQLSNDSQRSVVMHCTRLPFEAFAATSSNRLLGKHSLPLRAALVTSNPLNISSSSVISDAISSSSVITDDAKIGVLLLNLGGPETLDDVQPFLFNLFADPDIIRLPPVFQFLQKPLAQFISVARAPKSKEGYASIGGGSPLRHITDAQAEELRKCLWEKNVPAKVYVGMRYWHPFTEEAIEQIKRDGITKLVVLPLYPQFSISTSGSSLRLLERIFREDEYLVNMQHTVIPSWYQREGYIKAMANLIQSELGKFGSPNQVVIFFSAHGVPLAYVEEAGDPYKAEMEECVDLIMEELDKRKITNAYTLAYQSRVGPVEWLKPYTEEAITELGKKGVENLLAVPISFVSEHIETLEEIDVEYKELALKSGIKNWGRVPALGTEPMFISDLADAVVESLPYVGAMAVSNLEARQSLVPLGSVEELLATYDSQRRELPAPVTMWEWGWTKSAETWNGRAAMLAVLALLVLEVTTGKGFLHQWGILPSL.

Positions 1 to 32 (MNCPAMTASPSSSSSSSYSTFRPPPPLLPQLS) are disordered. The transit peptide at 1-83 (MNCPAMTASP…SNPLNISSSS (83 aa)) directs the protein to the chloroplast. The span at 9–21 (SPSSSSSSSYSTF) shows a compositional bias: low complexity. Val84 is subject to N-acetylvaline.

The protein belongs to the ferrochelatase family. In terms of tissue distribution, expressed in leaves and flowers.

It localises to the plastid. The protein localises to the chloroplast membrane. It is found in the chloroplast thylakoid membrane. It carries out the reaction heme b + 2 H(+) = protoporphyrin IX + Fe(2+). It functions in the pathway porphyrin-containing compound metabolism; protoheme biosynthesis; protoheme from protoporphyrin-IX: step 1/1. Catalyzes the last step of heme biosynthesis by inserting ferrous iron into protoporphyrin IX to produce protoheme. Produces heme for photosynthetic cytochromes, and for proteins involved in abiotic and biotic stress responses. May play a role in the quality control of individual chloroplasts during photo-oxidative stress through regulation of heme biosynthesis. The chain is Ferrochelatase-2, chloroplastic from Arabidopsis thaliana (Mouse-ear cress).